A 309-amino-acid polypeptide reads, in one-letter code: Aspartate carbamoyltransferase catalytic subunit (309 aa).

The carbamoyl phosphate site is built by R58 and T59. K86 is an L-aspartate binding site. Residues R108, H136, and Q139 each contribute to the carbamoyl phosphate site. R170 and R224 together coordinate L-aspartate. Positions 266 and 267 each coordinate carbamoyl phosphate.

This sequence belongs to the aspartate/ornithine carbamoyltransferase superfamily. ATCase family. In terms of assembly, heterododecamer (2C3:3R2) of six catalytic PyrB chains organized as two trimers (C3), and six regulatory PyrI chains organized as three dimers (R2).

It carries out the reaction carbamoyl phosphate + L-aspartate = N-carbamoyl-L-aspartate + phosphate + H(+). The protein operates within pyrimidine metabolism; UMP biosynthesis via de novo pathway; (S)-dihydroorotate from bicarbonate: step 2/3. Catalyzes the condensation of carbamoyl phosphate and aspartate to form carbamoyl aspartate and inorganic phosphate, the committed step in the de novo pyrimidine nucleotide biosynthesis pathway. This chain is Aspartate carbamoyltransferase catalytic subunit, found in Campylobacter concisus (strain 13826).